A 274-amino-acid chain; its full sequence is MQQLQNVIETAFERRADITPANVDTVTREAVNQVISLLDSGALRVAEKIDGQWVTHQWLKKAVLLSFRINDNQVIDGAESRYFDKVPMKFADYDEARFQKEGFRVVPPAAVRQGAFIARNTVLMPSYVNIGAYVDEGTMVDTWATVGSCAQIGKNVHLSGGVGIGGVLEPLQANPTIIEDNCFIGARSEVVEGVIVEEGSVISMGVYLGQSTKIYDRETGEVHYGRVPAGSVVVSGNLPSKDGKYSLYCAVIVKKVDAKTRGKVGINELLRTID.

Residues arginine 104 and aspartate 141 each contribute to the substrate site.

Belongs to the transferase hexapeptide repeat family. In terms of assembly, homotrimer.

The protein localises to the cytoplasm. The enzyme catalyses (S)-2,3,4,5-tetrahydrodipicolinate + succinyl-CoA + H2O = (S)-2-succinylamino-6-oxoheptanedioate + CoA. It functions in the pathway amino-acid biosynthesis; L-lysine biosynthesis via DAP pathway; LL-2,6-diaminopimelate from (S)-tetrahydrodipicolinate (succinylase route): step 1/3. In Salmonella arizonae (strain ATCC BAA-731 / CDC346-86 / RSK2980), this protein is 2,3,4,5-tetrahydropyridine-2,6-dicarboxylate N-succinyltransferase.